A 23-amino-acid chain; its full sequence is Hemocyanin subunit 1 (23 aa).

The tract at residues 1-23 (DSPGGASDTQKQHXVNSXXXKXY) is disordered.

It belongs to the tyrosinase family. Hemocyanin subfamily. As to expression, hemolymph.

The protein resides in the secreted. It is found in the extracellular space. Its function is as follows. Hemocyanins are copper-containing oxygen carriers occurring freely dissolved in the hemolymph of many mollusks and arthropods. In Cancer pagurus (Rock crab), this protein is Hemocyanin subunit 1.